The sequence spans 164 residues: Ribosome-binding factor A (164 aa).

The protein belongs to the RbfA family. In terms of assembly, monomer. Binds 30S ribosomal subunits, but not 50S ribosomal subunits or 70S ribosomes.

Its subcellular location is the cytoplasm. Its function is as follows. One of several proteins that assist in the late maturation steps of the functional core of the 30S ribosomal subunit. Associates with free 30S ribosomal subunits (but not with 30S subunits that are part of 70S ribosomes or polysomes). Required for efficient processing of 16S rRNA. May interact with the 5'-terminal helix region of 16S rRNA. This Mycobacterium leprae (strain Br4923) protein is Ribosome-binding factor A.